The chain runs to 335 residues: E3 ubiquitin ligase rnf-121 (335 aa).

Residues Met-1–His-47 lie on the Cytoplasmic side of the membrane. A helical membrane pass occupies residues Met-48 to Trp-68. The Lumenal portion of the chain corresponds to Lys-69–His-72. The helical transmembrane segment at Phe-73–Phe-93 threads the bilayer. Residues Asn-94–Arg-99 lie on the Cytoplasmic side of the membrane. A helical transmembrane segment spans residues Phe-100–Ala-120. Over Gln-121–Tyr-143 the chain is Lumenal. Residues Val-144–Phe-164 traverse the membrane as a helical segment. Over Gly-165 to Gln-168 the chain is Cytoplasmic. Residues Pro-169–Gly-189 form a helical membrane-spanning segment. At Arg-190–Glu-335 the chain is on the lumenal side. An RING-type; atypical zinc finger spans residues Cys-222–Lys-284.

The protein belongs to the RNF121 family. As to expression, expressed in body wall muscles, the hypodermis, seam cells, vulval cells, spermathecal cells, uterine cells and the distal tip cell (at protein level).

The protein resides in the endoplasmic reticulum membrane. It is found in the golgi apparatus membrane. The enzyme catalyses S-ubiquitinyl-[E2 ubiquitin-conjugating enzyme]-L-cysteine + [acceptor protein]-L-lysine = [E2 ubiquitin-conjugating enzyme]-L-cysteine + N(6)-ubiquitinyl-[acceptor protein]-L-lysine.. It functions in the pathway protein modification; protein ubiquitination. Its function is as follows. E3 ubiquitin ligase which accepts ubiquitin and transfers it to substrates such as the beta-integrin subunit pat-3, promoting their degradation by the endoplasmic reticulum-associated degradation (ERAD) pathway which is a pathway involved in ubiquitin-dependent degradation of misfolded endoplasmic reticulum proteins. Negatively regulates the unfolded protein response to reduce endoplasmic reticulum stress. Required for the cessation of distal tip cell migration at the end of larval morphogenesis. Plays a role in germline and gonad development. This Caenorhabditis elegans protein is E3 ubiquitin ligase rnf-121.